A 373-amino-acid chain; its full sequence is NAD-dependent protein deacetylase SIR2rp1 (373 aa).

Positions 12 to 349 (HALGEPTVEG…LKLAECLGLR (338 aa)) constitute a Deacetylase sirtuin-type domain. Residues 39-59 (GAGA…TGIY) and 124-127 (QNID) each bind NAD(+). The active-site Proton acceptor is His144. Zn(2+) contacts are provided by Cys152, Cys155, Cys176, and Cys179. NAD(+)-binding positions include 216–218 (GTS) and 241–243 (NRE). Residues 263–313 (DAVAKEGRSSSSQSRSPSASARREEGGTEDGSSSPNEEVEDASTSSSSDGY) form a disordered region. Over residues 271-282 (SSSSQSRSPSAS) the composition is skewed to low complexity. Cys335 contacts NAD(+).

The protein belongs to the sirtuin family. Class I subfamily. Zn(2+) is required as a cofactor.

It localises to the nucleus. It carries out the reaction N(6)-acetyl-L-lysyl-[protein] + NAD(+) + H2O = 2''-O-acetyl-ADP-D-ribose + nicotinamide + L-lysyl-[protein]. NAD-dependent deacetylase, which probably acts as a regulator of gene expression believed to help form modified chromatin structures on the genes it regulates. The polypeptide is NAD-dependent protein deacetylase SIR2rp1 (SIR2rp1) (Leishmania major).